A 486-amino-acid chain; its full sequence is Zinc finger CCCH domain-containing protein 49 (486 aa).

The C3H1-type zinc finger occupies 157–184; that stretch reads RNRAHVCSFYVRGECTRGAECPYRHEMP. The 74-residue stretch at 228 to 301 folds into the RRM domain; it reads RTLYIGGLDS…VRLKLMWGKP (74 aa). 2 disordered regions span residues 329 to 348 and 379 to 486; these read SQQQSGDQPQPPGMEGQQQP and LVES…NGMT. Low complexity-rich tracts occupy residues 389–407 and 415–430; these read PGPQQAGQGQASSSSGQSY and YHGGQYPPYYPPYGGY. Over residues 431–444 the composition is skewed to pro residues; the sequence is MPPPRMPYQQPPQY. Residues 445–486 show a composition bias toward low complexity; that stretch reads PAYQPMLAPPAQSQASSLQQPAPATQQLGQGPQQQTTQNGMT.

This chain is Zinc finger CCCH domain-containing protein 49, found in Oryza sativa subsp. japonica (Rice).